Consider the following 376-residue polypeptide: Glucose-1-phosphate adenylyltransferase (376 aa).

Residues tyrosine 101, glycine 166, 181–182 (EK), and serine 192 contribute to the alpha-D-glucose 1-phosphate site.

It belongs to the bacterial/plant glucose-1-phosphate adenylyltransferase family. In terms of assembly, homotetramer.

It carries out the reaction alpha-D-glucose 1-phosphate + ATP + H(+) = ADP-alpha-D-glucose + diphosphate. The protein operates within glycan biosynthesis; glycogen biosynthesis. Involved in the biosynthesis of ADP-glucose, a building block required for the elongation reactions to produce glycogen. Catalyzes the reaction between ATP and alpha-D-glucose 1-phosphate (G1P) to produce pyrophosphate and ADP-Glc. This Bacillus mycoides (strain KBAB4) (Bacillus weihenstephanensis) protein is Glucose-1-phosphate adenylyltransferase.